The following is a 252-amino-acid chain: MDSKMIAHNMSLTPTLAQWKKLRLKPKHTFVVGVLARPTDDISEETLRKTNVYKDNWFDKLAINHLSKSVQAATGISNNKSGFDSLVEAATVASQKFNTTQQQGIILDALDRAFPKPILSVIRRVMPPSKLAREYFAVFTTIFFAWLLGPSEVRESEINGRREKNIVHIKKCRFLEETNCVGMCINLCKMPSQLFIKDSFGMPVNMVPNFDDMSCEMIFGQEPPASTDDPALKQPCYKLCKAKKNHATQCLS.

The N-terminal 43 residues, 1 to 43 (MDSKMIAHNMSLTPTLAQWKKLRLKPKHTFVVGVLARPTDDIS), are a transit peptide targeting the chloroplast.

Requires Fe cation as cofactor. In terms of tissue distribution, highly expressed in roots. Expressed at low levels in leaves and stems.

The protein localises to the plastid. Its subcellular location is the chloroplast. The enzyme catalyses all-trans-beta-carotene = 9-cis-beta-carotene. Its function is as follows. Involved in strigolactones biosynthesis by catalyzing the isomerization of the C9-C10 double bond in all-trans-beta-carotene leading to 9-cis-beta-carotene and providing the substrate for CCD7. Strigolactones are hormones that inhibit tillering and shoot branching through the MAX-dependent pathway, contribute to the regulation of shoot architectural response to phosphate-limiting conditions and function as rhizosphere signals that stimulate hyphal branching of arbuscular mycorrhizal fungi and trigger seed germination of root parasitic weeds. This Medicago truncatula (Barrel medic) protein is Beta-carotene isomerase D27, chloroplastic.